Reading from the N-terminus, the 473-residue chain is UDP-N-acetylmuramate--L-alanine ligase (473 aa).

ATP is bound at residue 115 to 121 (GTHGKTT).

Belongs to the MurCDEF family.

It localises to the cytoplasm. The catalysed reaction is UDP-N-acetyl-alpha-D-muramate + L-alanine + ATP = UDP-N-acetyl-alpha-D-muramoyl-L-alanine + ADP + phosphate + H(+). It functions in the pathway cell wall biogenesis; peptidoglycan biosynthesis. Functionally, cell wall formation. In Rhizorhabdus wittichii (strain DSM 6014 / CCUG 31198 / JCM 15750 / NBRC 105917 / EY 4224 / RW1) (Sphingomonas wittichii), this protein is UDP-N-acetylmuramate--L-alanine ligase.